The sequence spans 184 residues: MKNVTDSFISLGYWPSAESFGFNTDILATNPINLSVVLGVLIFFGKGVLSDLLDNRKQRILKTIQNSEELRGGAIEQLEKARARLRKVEMEADQFRVNGYSEIEREKLNLINSTSKSLEQLENYKNETIRFEQQKAINQVRQQVFQQALQGALGTLNSCLDNELHLRTISANIGMFGTMKEITN.

A helical membrane pass occupies residues 27–49 (LATNPINLSVVLGVLIFFGKGVL).

Belongs to the ATPase B chain family. F-type ATPases have 2 components, F(1) - the catalytic core - and F(0) - the membrane proton channel. F(1) has five subunits: alpha(3), beta(3), gamma(1), delta(1), epsilon(1). F(0) has four main subunits: a(1), b(1), b'(1) and c(10-14). The alpha and beta chains form an alternating ring which encloses part of the gamma chain. F(1) is attached to F(0) by a central stalk formed by the gamma and epsilon chains, while a peripheral stalk is formed by the delta, b and b' chains.

The protein resides in the plastid. Its subcellular location is the chloroplast thylakoid membrane. F(1)F(0) ATP synthase produces ATP from ADP in the presence of a proton or sodium gradient. F-type ATPases consist of two structural domains, F(1) containing the extramembraneous catalytic core and F(0) containing the membrane proton channel, linked together by a central stalk and a peripheral stalk. During catalysis, ATP synthesis in the catalytic domain of F(1) is coupled via a rotary mechanism of the central stalk subunits to proton translocation. In terms of biological role, component of the F(0) channel, it forms part of the peripheral stalk, linking F(1) to F(0). In Cucumis sativus (Cucumber), this protein is ATP synthase subunit b, chloroplastic.